The chain runs to 371 residues: Queuine tRNA-ribosyltransferase (371 aa).

The Proton acceptor role is filled by Asp-90. Substrate is bound by residues 90-94 (DSGGF), Asp-144, Gln-188, and Gly-215. Positions 246 to 252 (GVGTPED) are RNA binding. Catalysis depends on Asp-265, which acts as the Nucleophile. An RNA binding; important for wobble base 34 recognition region spans residues 270–274 (TRNAR). Zn(2+)-binding residues include Cys-303, Cys-305, Cys-308, and His-334.

This sequence belongs to the queuine tRNA-ribosyltransferase family. As to quaternary structure, homodimer. Within each dimer, one monomer is responsible for RNA recognition and catalysis, while the other monomer binds to the replacement base PreQ1. Requires Zn(2+) as cofactor.

The catalysed reaction is 7-aminomethyl-7-carbaguanine + guanosine(34) in tRNA = 7-aminomethyl-7-carbaguanosine(34) in tRNA + guanine. The protein operates within tRNA modification; tRNA-queuosine biosynthesis. Functionally, catalyzes the base-exchange of a guanine (G) residue with the queuine precursor 7-aminomethyl-7-deazaguanine (PreQ1) at position 34 (anticodon wobble position) in tRNAs with GU(N) anticodons (tRNA-Asp, -Asn, -His and -Tyr). Catalysis occurs through a double-displacement mechanism. The nucleophile active site attacks the C1' of nucleotide 34 to detach the guanine base from the RNA, forming a covalent enzyme-RNA intermediate. The proton acceptor active site deprotonates the incoming PreQ1, allowing a nucleophilic attack on the C1' of the ribose to form the product. After dissociation, two additional enzymatic reactions on the tRNA convert PreQ1 to queuine (Q), resulting in the hypermodified nucleoside queuosine (7-(((4,5-cis-dihydroxy-2-cyclopenten-1-yl)amino)methyl)-7-deazaguanosine). In Neisseria gonorrhoeae (strain NCCP11945), this protein is Queuine tRNA-ribosyltransferase.